We begin with the raw amino-acid sequence, 607 residues long: Synaptotagmin-like protein 3 (607 aa).

One can recognise a RabBD domain in the interval E4 to E123. Residues V221–S279 form a disordered region. The span at S230–A241 shows a compositional bias: polar residues. Residues K248–P259 show a composition bias toward basic and acidic residues. C2 domains follow at residues V305 to Y430 and L458 to H590.

As to quaternary structure, monomer. Binds NRXN1. Binds RAB27A that has been activated by GTP-binding via its N-terminus. As to expression, highly expressed in spleen and lung. Detected at lower levels in heart and testis.

The protein resides in the endomembrane system. Its function is as follows. May act as Rab effector protein and play a role in vesicle trafficking. Binds phospholipids in the presence of calcium ions. The chain is Synaptotagmin-like protein 3 (Sytl3) from Mus musculus (Mouse).